An 83-amino-acid polypeptide reads, in one-letter code: Disintegrin bitistatin (83 aa).

One can recognise a Disintegrin domain in the interval 2–83; the sequence is PPVCGNKILE…GKSSDCPWNH (82 aa). Intrachain disulfides connect cysteine 5–cysteine 24, cysteine 5–cysteine 34, cysteine 16–cysteine 29, cysteine 16–cysteine 34, cysteine 18–cysteine 24, cysteine 18–cysteine 29, cysteine 28–cysteine 51, cysteine 42–cysteine 48, cysteine 47–cysteine 72, and cysteine 60–cysteine 79. The short motif at 64–66 is the Cell attachment site element; it reads RGD.

Belongs to the venom metalloproteinase (M12B) family. P-II subfamily. P-IIa sub-subfamily. As to quaternary structure, monomer. In terms of processing, exists in 3 forms in the venom. The forms A, B, and C are present at 53%, 32% and 15%. The forms A and B differ by their disulfide bond pattern in the N-terminal part. No information is known about form C. In terms of tissue distribution, expressed by the venom gland.

Its subcellular location is the secreted. Functionally, inhibits fibrinogen interaction with platelets. Acts by binding to alpha-IIb/beta-3 (ITGA2B/ITGB3) on the platelet surface and inhibits aggregation induced by ADP, thrombin, platelet-activating factor and collagen. The polypeptide is Disintegrin bitistatin (Bitis arietans (African puff adder)).